Reading from the N-terminus, the 336-residue chain is Dihydroorotate dehydrogenase (quinone) (336 aa).

FMN contacts are provided by residues 62-66 and Thr86; that span reads AGLDK. Residue Lys66 coordinates substrate. 111–115 lines the substrate pocket; sequence NRMGF. FMN contacts are provided by Asn139 and Asn172. Asn172 contacts substrate. Residue Ser175 is the Nucleophile of the active site. A substrate-binding site is contributed by Asn177. Lys217 and Thr245 together coordinate FMN. 246–247 serves as a coordination point for substrate; that stretch reads NT. Residues Gly268, Gly297, and 318–319 each bind FMN; that span reads YS.

It belongs to the dihydroorotate dehydrogenase family. Type 2 subfamily. In terms of assembly, monomer. It depends on FMN as a cofactor.

The protein resides in the cell membrane. It catalyses the reaction (S)-dihydroorotate + a quinone = orotate + a quinol. It functions in the pathway pyrimidine metabolism; UMP biosynthesis via de novo pathway; orotate from (S)-dihydroorotate (quinone route): step 1/1. In terms of biological role, catalyzes the conversion of dihydroorotate to orotate with quinone as electron acceptor. The sequence is that of Dihydroorotate dehydrogenase (quinone) from Edwardsiella ictaluri (strain 93-146).